A 235-amino-acid polypeptide reads, in one-letter code: Phosphoribosylaminoimidazole-succinocarboxamide synthase (235 aa).

It belongs to the SAICAR synthetase family.

It carries out the reaction 5-amino-1-(5-phospho-D-ribosyl)imidazole-4-carboxylate + L-aspartate + ATP = (2S)-2-[5-amino-1-(5-phospho-beta-D-ribosyl)imidazole-4-carboxamido]succinate + ADP + phosphate + 2 H(+). It functions in the pathway purine metabolism; IMP biosynthesis via de novo pathway; 5-amino-1-(5-phospho-D-ribosyl)imidazole-4-carboxamide from 5-amino-1-(5-phospho-D-ribosyl)imidazole-4-carboxylate: step 1/2. The polypeptide is Phosphoribosylaminoimidazole-succinocarboxamide synthase (Streptococcus pneumoniae serotype 19F (strain G54)).